A 221-amino-acid chain; its full sequence is Transcriptional regulatory protein QseB (221 aa).

The region spanning 2–116 (RILLIEDDNL…EVAARLQALI (115 aa)) is the Response regulatory domain. D51 carries the post-translational modification 4-aspartylphosphate. Positions 124–218 (HSVIEQAGVK…VHGVGYALGQ (95 aa)) form a DNA-binding region, ompR/PhoB-type.

Post-translationally, phosphorylated by QseC.

The protein localises to the cytoplasm. Its function is as follows. Member of a two-component regulatory system QseB/QseC. The protein is Transcriptional regulatory protein QseB (qseB) of Haemophilus influenzae (strain ATCC 51907 / DSM 11121 / KW20 / Rd).